The chain runs to 691 residues: Solute carrier organic anion transporter family member 1B1 (691 aa).

Residues 1 to 28 (MDQNQHLNKTAEAQPSENKKTRYCNGLK) are Cytoplasmic-facing. A helical transmembrane segment spans residues 29–48 (MFLAALSLSFIAKTLGAIIM). The Extracellular segment spans residues 49-67 (KSSIIHIERRFEISSSLVG). A helical membrane pass occupies residues 68 to 88 (FIDGSFEIGNLLVIVFVSYFG). Over 89–94 (SKLHRP) the chain is Cytoplasmic. Residues 95–119 (KLIGIGCFIMGIGGVLTALPHFFMG) form a helical membrane-spanning segment. At 120–168 (YYRYSKETNINSSENSTSTLSTCLINQILSLNRASPEIVGKGCLKESGS) the chain is on the extracellular side. N-linked (GlcNAc...) asparagine glycans are attached at residues N130 and N134. A helical membrane pass occupies residues 169–197 (YMWIYVFMGNMLRGIGETPIVPLGLSYID). The Cytoplasmic segment spans residues 198–216 (DFAKEGHSSLYLGILNAIA). Residues 217–237 (MIGPIIGFTLGSLFSKMYVDI) form a helical membrane-spanning segment. At 238-255 (GYVDLSTIRITPTDSRWV) the chain is on the extracellular side. A helical transmembrane segment spans residues 256 to 280 (GAWWLNFLVSGLFSIISSIPFFFLP). The Cytoplasmic segment spans residues 281–331 (QTPNKPQKERKASLSLHVLETNDEKDQTANLTNQGKNITKNVTGFFQSFKS). Phosphoserine is present on residues S293 and S295. Residues 332-353 (ILTNPLYVMFVLLTLLQVSSYI) traverse the membrane as a helical segment. At 354-373 (GAFTYVFKYVEQQYGQPSSK) the chain is on the extracellular side. A helical transmembrane segment spans residues 374-397 (ANILLGVITIPIFASGMFLGGYII). Residues 398–401 (KKFK) are Cytoplasmic-facing. The helical transmembrane segment at 402 to 425 (LNTVGIAKFSCFTAVMSLSFYLLY) threads the bilayer. Topologically, residues 426-537 (FFILCENKSV…DACTRKFYFF (112 aa)) are extracellular. N-linked (GlcNAc...) asparagine glycosylation occurs at N432. One can recognise a Kazal-like domain in the interval 453–508 (DVPLSYCNSDCNCDESQWEPVCGNNGITYISPCLAGCKSSSGNKKPIVFYNCSCLE). 3 disulfide bridges follow: C459/C489, C465/C485, and C474/C506. N-linked (GlcNAc...) asparagine glycosylation is found at N503 and N516. A helical membrane pass occupies residues 538–560 (VAIQVLNLFFSALGGTSHVMLIV). The Cytoplasmic portion of the chain corresponds to 561 to 569 (KIVQPELKS). Residues 570 to 595 (LALGFHSMVIRALGGILAPIYFGALI) traverse the membrane as a helical segment. Residues 596–629 (DTTCIKWSTNNCGTRGSCRTYNSTSFSRVYLGLS) are Extracellular-facing. N617 is a glycosylation site (N-linked (GlcNAc...) asparagine). Residues 630 to 647 (SMLRVSSLVLYIILIYAM) traverse the membrane as a helical segment. Residues 648–691 (KKKYQEKDINASENGSVMDEANLESLNKNKHFVPSAGADSETHC) are Cytoplasmic-facing. A phosphoserine mark is found at S672 and S682.

Belongs to the organo anion transporter (TC 2.A.60) family. As to expression, highly expressed in liver, at the basolateral membranes of centrilobular hepatocytes. Expressed in liver (at protein level). Expressed in fetal liver. Not detected in heart, brain, placenta, lung, skeletal muscle, kidney, pancreas, spleen, thymus, prostate, testis, ovary, small intestine, colon and leukocyte. In testis, primarily localized to the basal membrane of Sertoli cells and weakly expressed in Leydig cells and within the tubules.

It localises to the basolateral cell membrane. It is found in the basal cell membrane. It catalyses the reaction taurocholate(out) = taurocholate(in). The catalysed reaction is dehydroepiandrosterone 3-sulfate(out) = dehydroepiandrosterone 3-sulfate(in). The enzyme catalyses estrone 3-sulfate(out) = estrone 3-sulfate(in). It carries out the reaction 3,3',5'-triiodo-L-thyronine(out) = 3,3',5'-triiodo-L-thyronine(in). It catalyses the reaction L-thyroxine(out) = L-thyroxine(in). The catalysed reaction is prostaglandin E2(out) = prostaglandin E2(in). The enzyme catalyses thromboxane B2(out) = thromboxane B2(in). It carries out the reaction 17beta-estradiol 17-O-(beta-D-glucuronate)(out) = 17beta-estradiol 17-O-(beta-D-glucuronate)(in). It catalyses the reaction leukotriene C4(out) = leukotriene C4(in). The catalysed reaction is leukotriene E4(out) = leukotriene E4(in). The enzyme catalyses (4E,15E)-bilirubin IXalpha C8-beta-D-glucuronoside(out) = (4E,15E)-bilirubin IXalpha C8-beta-D-glucuronoside(in). It carries out the reaction bilirubin IXalpha bis-beta-D-glucuronoside(out) = bilirubin IXalpha bis-beta-D-glucuronoside(in). In terms of biological role, mediates the Na(+)-independent uptake of organic anions. Shows broad substrate specificity, can transport both organic anions such as bile acid taurocholate (cholyltaurine) and conjugated steroids (dehydroepiandrosterone 3-sulfate, 17-beta-glucuronosyl estradiol, and estrone 3-sulfate), as well as eicosanoids (prostaglandin E2, thromboxane B2, leukotriene C4, and leukotriene E4), and thyroid hormones (T4/L-thyroxine, and T3/3,3',5'-triiodo-L-thyronine). Can take up bilirubin glucuronides from plasma into the liver, contributing to the detoxification-enhancing liver-blood shuttling loop. Involved in the clearance of endogenous and exogenous substrates from the liver. Transports coproporphyrin I and III, by-products of heme synthesis, and may be involved in their hepatic disposition. May contribute to regulate the transport of organic compounds in testes across the blood-testis-barrier. Can transport HMG-CoA reductase inhibitors (also known as statins), such as pravastatin and pitavastatin, a clinically important class of hypolipidemic drugs. May play an important role in plasma and tissue distribution of the structurally diverse chemotherapeutic drug methotrexate. May also transport antihypertension agents, such as the angiotensin-converting enzyme (ACE) inhibitor prodrug enalapril, and the highly selective angiotensin II AT1-receptor antagonist valsartan, in the liver. Shows a pH-sensitive substrate specificity towards prostaglandin E2 and T4 which may be ascribed to the protonation state of the binding site and leads to a stimulation of substrate transport in an acidic microenvironment. Hydrogencarbonate/HCO3(-) acts as the probable counteranion that exchanges for organic anions. This Homo sapiens (Human) protein is Solute carrier organic anion transporter family member 1B1 (SLCO1B1).